We begin with the raw amino-acid sequence, 440 residues long: Microtubule-associated tumor suppressor 1 homolog A (440 aa).

The disordered stretch occupies residues 44-67; it reads KSRTNSKNPQPPTNGQPDLVPPES. Positions 69 to 401 form a coiled coil; that stretch reads SRNVEYYKAQ…RLSMENEELL (333 aa). Positions 407 to 440 are disordered; it reads GDLNSPRKISPSPSLNLQSPRTSGMFSSPPVSPR. Polar residues predominate over residues 417-432; that stretch reads PSPSLNLQSPRTSGMF.

Belongs to the MTUS1 family. Homodimer.

It localises to the mitochondrion. The protein localises to the golgi apparatus. Its subcellular location is the cell membrane. The protein resides in the nucleus. In terms of biological role, may inhibit cell proliferation. This chain is Microtubule-associated tumor suppressor 1 homolog A (mtus1a), found in Danio rerio (Zebrafish).